We begin with the raw amino-acid sequence, 347 residues long: Phenylalanine--tRNA ligase alpha subunit (347 aa).

Position 265 (Glu-265) interacts with Mg(2+).

It belongs to the class-II aminoacyl-tRNA synthetase family. Phe-tRNA synthetase alpha subunit type 1 subfamily. As to quaternary structure, tetramer of two alpha and two beta subunits. Requires Mg(2+) as cofactor.

The protein localises to the cytoplasm. The catalysed reaction is tRNA(Phe) + L-phenylalanine + ATP = L-phenylalanyl-tRNA(Phe) + AMP + diphosphate + H(+). The polypeptide is Phenylalanine--tRNA ligase alpha subunit (Wolbachia sp. subsp. Drosophila simulans (strain wRi)).